Consider the following 422-residue polypeptide: MWEFVKQTDPEIYEVIMKEWERQEYGLELIASENFVSPAVMEAMGSVLTNKYAEGYPKKRYYGGCEWVDVAENLARERAKKLFNAKYANVQPHSGSQANMGAYFALAEPGSTLMGMSLSHGGHLTHGASVNFSGQIYKVVQYGVNPQTETIDYDEVRKLALEHKPKIIVAGGSAYSRIIDFKKFREIADEVGAYLVVDMAHFAGLVAAGIYPNPLEYAHVVTSTTHKTLRGPRGGLILTNDEEIYKAINKAIFPGIQGGPLMHVIAAKAVCFKEALSDEFKAYQNQIVKNAKALAKALENRGLRIVSGGTDTHLMLVDLNPLNVTGKAAETALGYCHITVNKNTIPNETRSPFVASGIRLGTPALTTRGMKEEQMEEIADLIVTVLKNVKDEEGNVDEEVAKRVSDRVIELCKQFPLYVGKI.

Residues L118 and 122-124 each bind (6S)-5,6,7,8-tetrahydrofolate; that span reads GHL. The residue at position 227 (K227) is an N6-(pyridoxal phosphate)lysine. (6S)-5,6,7,8-tetrahydrofolate-binding positions include E243 and 351 to 353; that span reads SPF.

This sequence belongs to the SHMT family. In terms of assembly, homodimer. It depends on pyridoxal 5'-phosphate as a cofactor.

The protein localises to the cytoplasm. The enzyme catalyses (6R)-5,10-methylene-5,6,7,8-tetrahydrofolate + glycine + H2O = (6S)-5,6,7,8-tetrahydrofolate + L-serine. The protein operates within one-carbon metabolism; tetrahydrofolate interconversion. It functions in the pathway amino-acid biosynthesis; glycine biosynthesis; glycine from L-serine: step 1/1. In terms of biological role, catalyzes the reversible interconversion of serine and glycine with tetrahydrofolate (THF) serving as the one-carbon carrier. This reaction serves as the major source of one-carbon groups required for the biosynthesis of purines, thymidylate, methionine, and other important biomolecules. Also exhibits THF-independent aldolase activity toward beta-hydroxyamino acids, producing glycine and aldehydes, via a retro-aldol mechanism. The chain is Serine hydroxymethyltransferase from Fervidobacterium nodosum (strain ATCC 35602 / DSM 5306 / Rt17-B1).